A 1167-amino-acid polypeptide reads, in one-letter code: White collar 1 protein (1167 aa).

2 disordered regions span residues 1–91 (MNNN…MSGG) and 307–355 (STPA…GASQ). Over residues 21–57 (QHQQQQQQQQQQQQQQQQQQQQQQQQQQQQHQHQQQQ) the composition is skewed to low complexity. Composition is skewed to polar residues over residues 70 to 91 (TPPT…MSGG) and 307 to 325 (STPA…TQTI). The span at 335 to 348 (VTNAPTPAPFTSTP) shows a compositional bias: low complexity. One can recognise a PAS 1 domain in the interval 381–452 (KLKLGAVDMS…KREFVENNAV (72 aa)). An S-4a-FMN cysteine modification is found at C428. Positions 469–508 (LINYRKGGKPFLNLLTMIPIPWDTEEIRYFIGFQIDLVEC) constitute a PAC 1 domain. In terms of domain architecture, PAS 2 spans 574–644 (KQSWDKMLLE…RELKEAQQHT (71 aa)). The PAC 2 domain occupies 650-691 (FRIRRKNSGYTWFESHGTLFNEQGKGRKCIILVGRKRPVFAL). The region spanning 693–763 (RKDLELNGGI…RTIEKARKGK (71 aa)) is the PAS 3 domain. The segment covering 849-861 (MSKSGSSDSTGAM) has biased composition (low complexity). 4 disordered regions span residues 849–872 (MSKS…GPGQ), 918–952 (KKKR…PSGN), 966–1047 (QTGR…TGST), and 1060–1167 (VNAL…GLSV). A GATA-type zinc finger spans residues 934-959 (CANCHTRNTPEWRRGPSGNRDLCNSC). Residues 968-977 (GRVSPRTSSR) show a composition bias toward polar residues. A compositionally biased stretch (low complexity) spans 986 to 995 (KKSNSPSHSS). A compositionally biased stretch (polar residues) spans 1004–1033 (DSPSTTTATKNSPSLRGSSTTAPGTITTDS). 2 stretches are compositionally biased toward low complexity: residues 1036 to 1047 (AVASSASGTGST) and 1104 to 1128 (QHQQ…QQHQ).

Heterodimer of wc-1 and wc-2. In terms of processing, FMN binds covalently to cysteine after exposure to blue light and is reversed in the dark.

Its subcellular location is the nucleus. May function as a transcription factor involved in light regulation. Binds and affects blue light regulation of the al-3 gene. Wc-1 and wc-2 proteins interact via homologous PAS domains, bind to promoters of light regulated genes such as frq, and activate transcription. The protein is White collar 1 protein (wc-1) of Neurospora crassa (strain ATCC 24698 / 74-OR23-1A / CBS 708.71 / DSM 1257 / FGSC 987).